Here is a 150-residue protein sequence, read N- to C-terminus: SsrA-binding protein (150 aa).

It belongs to the SmpB family.

It localises to the cytoplasm. Functionally, required for rescue of stalled ribosomes mediated by trans-translation. Binds to transfer-messenger RNA (tmRNA), required for stable association of tmRNA with ribosomes. tmRNA and SmpB together mimic tRNA shape, replacing the anticodon stem-loop with SmpB. tmRNA is encoded by the ssrA gene; the 2 termini fold to resemble tRNA(Ala) and it encodes a 'tag peptide', a short internal open reading frame. During trans-translation Ala-aminoacylated tmRNA acts like a tRNA, entering the A-site of stalled ribosomes, displacing the stalled mRNA. The ribosome then switches to translate the ORF on the tmRNA; the nascent peptide is terminated with the 'tag peptide' encoded by the tmRNA and targeted for degradation. The ribosome is freed to recommence translation, which seems to be the essential function of trans-translation. This is SsrA-binding protein from Bacteroides thetaiotaomicron (strain ATCC 29148 / DSM 2079 / JCM 5827 / CCUG 10774 / NCTC 10582 / VPI-5482 / E50).